Consider the following 540-residue polypeptide: Early growth response protein 1 (540 aa).

2 disordered regions span residues 1–105 (MAAA…AESF) and 162–240 (VSMT…PAYP). A compositionally biased stretch (gly residues) spans 64–75 (SSGGGGGGGGGS). Residues 167–190 (PPATSSSASSPAASSSASQSPPLS) are compositionally biased toward low complexity. The span at 192–201 (AVQSNDSSPI) shows a compositional bias: polar residues. Residue lysine 304 forms a Glycyl lysine isopeptide (Lys-Gly) (interchain with G-Cter in SUMO2) linkage. The interval 317 to 337 (PSRMRKYPNRPSKTPPHERPY) is disordered. A C2H2-type 1 zinc finger spans residues 337–361 (YACPVESCDRRFSRSDELTRHIRIH). The segment at 366–388 (PQCRISMRNFSRSDHLTTHIRTH) adopts a C2H2-type 2; degenerate zinc-finger fold. The C2H2-type 3 zinc finger occupies 394–416 (FACDICGRKFARSDERKRHTKIH). Positions 407 to 482 (DERKRHTKIH…SPGSSTYPSP (76 aa)) are disordered. The span at 411 to 421 (RHTKIHLRQKD) shows a compositional bias: basic residues. Low complexity predominate over residues 427–482 (SAASAATSSLPSYPSPVATSYPSPATTSYPSPATTSYPSPVPTSYSSPGSSTYPSP).

The protein belongs to the EGR C2H2-type zinc-finger protein family. In terms of assembly, interacts with SNAI1 and SP1 upon 12-O-tetradecanoylphorbol-13-acetate (TPA) induction.

Its subcellular location is the nucleus. It localises to the cytoplasm. Functionally, transcriptional regulator. Recognizes and binds to the DNA sequence 5'-GCG(T/G)GGGCG-3'(EGR-site) in the promoter region of target genes. Binds double-stranded target DNA, irrespective of the cytosine methylation status. Regulates the transcription of numerous target genes, and thereby plays an important role in regulating the response to growth factors, DNA damage, and ischemia. Plays a role in the regulation of cell survival, proliferation and cell death. Activates expression of p53/TP53 and TGFB1, and thereby helps prevent tumor formation. Required for normal progress through mitosis and normal proliferation of hepatocytes after partial hepatectomy. Mediates responses to ischemia and hypoxia; regulates the expression of proteins such as IL1B and CXCL2 that are involved in inflammatory processes and development of tissue damage after ischemia. Regulates biosynthesis of luteinizing hormone (LHB) in the pituitary. Regulates the amplitude of the expression rhythms of clock genes: BMAL1, PER2 and NR1D1 in the liver via the activation of PER1 (clock repressor) transcription. Regulates the rhythmic expression of core-clock gene BMAL1 in the suprachiasmatic nucleus (SCN). The sequence is that of Early growth response protein 1 (EGR1) from Bos taurus (Bovine).